The following is a 969-amino-acid chain: Putative zinc protease mug138 (969 aa).

Zn(2+) is bound at residue His68. Catalysis depends on Glu71, which acts as the Proton acceptor. Zn(2+) is bound by residues His72 and Glu149.

The protein belongs to the peptidase M16 family.

The protein localises to the cytoplasm. Its function is as follows. Has a role in meiosis. This chain is Putative zinc protease mug138 (mug138), found in Schizosaccharomyces pombe (strain 972 / ATCC 24843) (Fission yeast).